A 124-amino-acid polypeptide reads, in one-letter code: Putative outer membrane protein CT_569 (124 aa).

The N-terminal stretch at 1–31 (MKKTKKRKQSITLVEMMVVITLIGIIGGALA) is a signal peptide.

Its subcellular location is the cell outer membrane. This chain is Putative outer membrane protein CT_569, found in Chlamydia trachomatis serovar D (strain ATCC VR-885 / DSM 19411 / UW-3/Cx).